A 352-amino-acid polypeptide reads, in one-letter code: Probable cytosolic iron-sulfur protein assembly protein CIAO1 homolog (352 aa).

7 WD repeats span residues 12–51, 58–97, 106–145, 151–190, 195–234, 245–284, and 303–352; these read ASNK…LWGS, AHKK…SAPE, GHTS…DVQC, PHSQ…WTVF, GHDS…GKSS, YHTR…LTHI, and AHSE…EYEL.

This sequence belongs to the WD repeat CIA1 family.

In terms of biological role, essential component of the cytosolic iron-sulfur (Fe/S) protein assembly machinery. Required for the maturation of extramitochondrial Fe/S proteins. The sequence is that of Probable cytosolic iron-sulfur protein assembly protein CIAO1 homolog from Schistosoma japonicum (Blood fluke).